The following is an 828-amino-acid chain: Mediator of RNA polymerase II transcription subunit 16 (828 aa).

WD repeat units lie at residues Gly68–Trp107, Arg199–Lys241, Asp264–Asn308, Asn622–Val663, and Phe777–Cys816.

It belongs to the Mediator complex subunit 16 family. As to quaternary structure, component of the Mediator complex.

It localises to the nucleus. In terms of biological role, component of the Mediator complex, a coactivator involved in the regulated transcription of nearly all RNA polymerase II-dependent genes. Mediator functions as a bridge to convey information from gene-specific regulatory proteins to the basal RNA polymerase II transcription machinery. Mediator is recruited to promoters by direct interactions with regulatory proteins and serves as a scaffold for the assembly of a functional preinitiation complex with RNA polymerase II and the general transcription factors. The protein is Mediator of RNA polymerase II transcription subunit 16 (med16) of Xenopus tropicalis (Western clawed frog).